The chain runs to 354 residues: Serum paraoxonase/lactonase 3 (354 aa).

A glycan (N-linked (GlcNAc...) asparagine) is linked at asparagine 29. A disulfide bridge connects residues cysteine 42 and cysteine 352. The Ca(2+) site is built by glutamate 53 and aspartate 54. Catalysis depends on histidine 114, which acts as the Proton acceptor. Position 116 (isoleucine 116) interacts with Ca(2+). Serine 165 is modified (phosphoserine). Ca(2+)-binding residues include asparagine 167, aspartate 168, asparagine 223, aspartate 268, and asparagine 269. Residues asparagine 269 and asparagine 323 are each glycosylated (N-linked (GlcNAc...) asparagine).

Belongs to the paraoxonase family. As to quaternary structure, homodimer. It depends on Ca(2+) as a cofactor. The signal sequence is not cleaved.

The protein resides in the secreted. The protein localises to the extracellular space. The enzyme catalyses a phenyl acetate + H2O = a phenol + acetate + H(+). The catalysed reaction is An aryl dialkyl phosphate + H2O = dialkyl phosphate + an aryl alcohol.. It catalyses the reaction an N-acyl-L-homoserine lactone + H2O = an N-acyl-L-homoserine + H(+). Functionally, has low activity towards the organophosphate paraxon and aromatic carboxylic acid esters. Rapidly hydrolyzes lactones such as statin prodrugs (e.g. lovastatin). Hydrolyzes aromatic lactones and 5- or 6-member ring lactones with aliphatic substituents but not simple lactones or those with polar substituents. This chain is Serum paraoxonase/lactonase 3 (PON3), found in Homo sapiens (Human).